A 968-amino-acid polypeptide reads, in one-letter code: RNA polymerase-associated protein RapA (968 aa).

In terms of domain architecture, Helicase ATP-binding spans aspartate 164–asparagine 334. Position 177-184 (aspartate 177–threonine 184) interacts with ATP. The short motif at aspartate 280–histidine 283 is the DEAH box element. The Helicase C-terminal domain maps to arginine 490–glycine 662.

Belongs to the SNF2/RAD54 helicase family. RapA subfamily. Interacts with the RNAP. Has a higher affinity for the core RNAP than for the holoenzyme. Its ATPase activity is stimulated by binding to RNAP.

Transcription regulator that activates transcription by stimulating RNA polymerase (RNAP) recycling in case of stress conditions such as supercoiled DNA or high salt concentrations. Probably acts by releasing the RNAP, when it is trapped or immobilized on tightly supercoiled DNA. Does not activate transcription on linear DNA. Probably not involved in DNA repair. The protein is RNA polymerase-associated protein RapA of Cronobacter sakazakii (strain ATCC BAA-894) (Enterobacter sakazakii).